The following is a 498-amino-acid chain: ATP synthase subunit beta, chloroplastic (498 aa).

172–179 provides a ligand contact to ATP; the sequence is GGAGVGKT.

Belongs to the ATPase alpha/beta chains family. F-type ATPases have 2 components, CF(1) - the catalytic core - and CF(0) - the membrane proton channel. CF(1) has five subunits: alpha(3), beta(3), gamma(1), delta(1), epsilon(1). CF(0) has four main subunits: a(1), b(1), b'(1) and c(9-12).

The protein resides in the plastid. It localises to the chloroplast thylakoid membrane. The catalysed reaction is ATP + H2O + 4 H(+)(in) = ADP + phosphate + 5 H(+)(out). In terms of biological role, produces ATP from ADP in the presence of a proton gradient across the membrane. The catalytic sites are hosted primarily by the beta subunits. The protein is ATP synthase subunit beta, chloroplastic of Zea mays (Maize).